The following is a 331-amino-acid chain: Holliday junction branch migration complex subunit RuvB (331 aa).

A large ATPase domain (RuvB-L) region spans residues 1-182 (MSNDTLHKYE…FGIPLHLEFY (182 aa)). ATP-binding positions include L21, R22, G63, K66, T67, T68, 129–131 (EDY), R172, Y182, and R219. T67 contributes to the Mg(2+) binding site. Residues 183–254 (SVDELVLVIK…FANSALFRLG (72 aa)) are small ATPAse domain (RuvB-S). Residues 257–331 (GAGFDKMDLK…FEYLLSSKYI (75 aa)) form a head domain (RuvB-H) region. Positions 310 and 315 each coordinate DNA.

It belongs to the RuvB family. As to quaternary structure, homohexamer. Forms an RuvA(8)-RuvB(12)-Holliday junction (HJ) complex. HJ DNA is sandwiched between 2 RuvA tetramers; dsDNA enters through RuvA and exits via RuvB. An RuvB hexamer assembles on each DNA strand where it exits the tetramer. Each RuvB hexamer is contacted by two RuvA subunits (via domain III) on 2 adjacent RuvB subunits; this complex drives branch migration. In the full resolvosome a probable DNA-RuvA(4)-RuvB(12)-RuvC(2) complex forms which resolves the HJ.

It localises to the cytoplasm. It carries out the reaction ATP + H2O = ADP + phosphate + H(+). In terms of biological role, the RuvA-RuvB-RuvC complex processes Holliday junction (HJ) DNA during genetic recombination and DNA repair, while the RuvA-RuvB complex plays an important role in the rescue of blocked DNA replication forks via replication fork reversal (RFR). RuvA specifically binds to HJ cruciform DNA, conferring on it an open structure. The RuvB hexamer acts as an ATP-dependent pump, pulling dsDNA into and through the RuvAB complex. RuvB forms 2 homohexamers on either side of HJ DNA bound by 1 or 2 RuvA tetramers; 4 subunits per hexamer contact DNA at a time. Coordinated motions by a converter formed by DNA-disengaged RuvB subunits stimulates ATP hydrolysis and nucleotide exchange. Immobilization of the converter enables RuvB to convert the ATP-contained energy into a lever motion, pulling 2 nucleotides of DNA out of the RuvA tetramer per ATP hydrolyzed, thus driving DNA branch migration. The RuvB motors rotate together with the DNA substrate, which together with the progressing nucleotide cycle form the mechanistic basis for DNA recombination by continuous HJ branch migration. Branch migration allows RuvC to scan DNA until it finds its consensus sequence, where it cleaves and resolves cruciform DNA. In Anaplasma marginale (strain Florida), this protein is Holliday junction branch migration complex subunit RuvB.